A 985-amino-acid polypeptide reads, in one-letter code: Invasin (985 aa).

A D1 region spans residues 494-594 (SVTVQQPQLT…RQSVDTHFVK (101 aa)). The Extracellular portion of the chain corresponds to 494 to 985 (SVTVQQPQLT…LAFPLCALAI (492 aa)). 2 consecutive Big-1 domains span residues 503-594 (TLTA…HFVK) and 601-691 (KSTL…VNFT). Residues 595-694 (GTIAADKSTL…SVTVNFTADP (100 aa)) are D2. The interval 695–794 (IPDAGRSSFT…LQKKISLFPV (100 aa)) is D3. The tract at residues 795-886 (PTLTGILVNG…YSVSYRFYPN (92 aa)) is D4. The interval 795–985 (PTLTGILVNG…LAFPLCALAI (191 aa)) is integrin-binding. A D5 region spans residues 887–985 (RWIYDGGTSL…LAFPLCALAI (99 aa)). An intrachain disulfide couples C906 to C981.

Belongs to the intimin/invasin family.

It localises to the cell surface. Its function is as follows. Invasin is a protein that allows enteric bacteria to penetrate cultured mammalian cells. The entry of invasin in the cell is mediated by binding several beta-1 chain integrins. The protein is Invasin of Yersinia pseudotuberculosis serotype I (strain IP32953).